Reading from the N-terminus, the 149-residue chain is 3-dehydroquinate dehydratase (149 aa).

The Proton acceptor role is filled by Tyr-21. Substrate contacts are provided by Asn-73, His-79, and Asp-86. His-99 (proton donor) is an active-site residue. Substrate is bound by residues 100-101 and Arg-110; that span reads LT.

Belongs to the type-II 3-dehydroquinase family. As to quaternary structure, homododecamer.

The enzyme catalyses 3-dehydroquinate = 3-dehydroshikimate + H2O. It participates in metabolic intermediate biosynthesis; chorismate biosynthesis; chorismate from D-erythrose 4-phosphate and phosphoenolpyruvate: step 3/7. In terms of biological role, catalyzes a trans-dehydration via an enolate intermediate. This is 3-dehydroquinate dehydratase from Thermus thermophilus (strain ATCC BAA-163 / DSM 7039 / HB27).